Consider the following 780-residue polypeptide: Cullin-5 (780 aa).

Ser34 is subject to Phosphoserine. Thr210 is subject to Phosphothreonine. In terms of domain architecture, Cullin neddylation spans 711–772 (RILRTQEAII…HKYIRRDESD (62 aa)). Lys724 is covalently cross-linked (Glycyl lysine isopeptide (Lys-Gly) (interchain with G-Cter in NEDD8)).

This sequence belongs to the cullin family. Component of multiple cullin-5-RING E3 ubiquitin-protein ligase complexes (ECS complexes, also named CRL5 complexes) formed of CUL5, Elongin BC (ELOB and ELOC), RNF7/RBX2 and a variable SOCS box domain-containing protein as substrate-specific recognition component. CUL5-containing ECS complexes specifically contain RNF7/RBX2, and not RBX1, as catalytic subunit. Component of the ECS(ASB2) complex with the substrate recognition component ASB2. Component of the ECS(ASB6) complex with the substrate recognition component ASB6. Component of the ECS(ASB7) complex with the substrate recognition component ASB7. Component of the ECS(ASB9) complex with the substrate recognition component ASB9. Component of the ECS(ASB11) complex with the substrate recognition component ASB11. Component of the ECS(ASB12) complex with the substrate recognition component ASB12. Component of the ECS(LRRC41) complex with the substrate recognition component LRRC41. Component of the ECS(SOCS1) complex with the substrate recognition component SOCS1. Component of the ECS(SOCS2) complex with the substrate recognition component SOCS2. Component of the ECS(WSB1) complex with the substrate recognition subunit WSB1. Component of the ECS(SOCS3) complex with the substrate recognition component SOCS3. Component of the ECS(SOCS7) complex with the substrate recognition component SOCS7. Component of the ECS(SPSB1) complex with the substrate recognition component SPSB1. Component of the ECS(SPSB3) complex with the substrate recognition component SPSB3. Component of the ECS(SPSB2) complex with the substrate recognition component SPSB2. Component of the ECS(SPSB4) complex with the substrate recognition component SPSB4. Component of the ECS(RAB40) complex with the substrate recognition subunit RAB40A, RAB40B or RAB40C. Component of the ECS(KLHDC1) complex with the substrate recognition component KLHDC1. Component of the ECS(PCMTD1) complex with the substrate recognition subunit PCMTD1. May also form complexes containing RBX1 and ELOA or VHL; additional evidence is however required to confirm this result in vivo. Interacts (when neddylated) with ARIH2; leading to activate the E3 ligase activity of ARIH2. Interacts with ERCC6; the interaction is induced by DNA damaging agents or inhibitors of RNA polymerase II elongation. Interacts with ELOA (via the BC-box). Interacts (unneddylated form) with DCUN1D1, DCUN1D2, DCUN1D3, DCUN1D4 and DCUN1D5; these interactions promote the cullin neddylation. Neddylated; which enhances the ubiquitination activity of ECS complexes and prevents binding of the inhibitor CAND1. Deneddylated via its interaction with the COP9 signalosome (CSN).

The protein localises to the nucleus. Its pathway is protein modification; protein ubiquitination. Core component of multiple cullin-5-RING E3 ubiquitin-protein ligase complexes (ECS complexes, also named CRL5 complexes), which mediate the ubiquitination and subsequent proteasomal degradation of target proteins. Acts a scaffold protein that contributes to catalysis through positioning of the substrate and the ubiquitin-conjugating enzyme. The functional specificity of the E3 ubiquitin-protein ligase complex depends on the variable SOCS box-containing substrate recognition component. Acts as a key regulator of neuron positioning during cortex development: component of various SOCS-containing ECS complexes, such as the ECS(SOCS7) complex, that regulate reelin signaling by mediating ubiquitination and degradation of DAB1. ECS(SOCS1) seems to direct ubiquitination of JAK2. The ECS(SOCS2) complex mediates the ubiquitination and subsequent proteasomal degradation of phosphorylated EPOR and GHR. The ECS(SPSB3) complex catalyzes ubiquitination of nuclear CGAS. ECS(KLHDC1) complex is part of the DesCEND (destruction via C-end degrons) pathway and mediates ubiquitination and degradation of truncated SELENOS selenoprotein produced by failed UGA/Sec decoding, which ends with a glycine. The ECS(ASB9) complex mediates ubiquitination and degradation of CKB. As part of some ECS complex, promotes 'Lys-11'-linked ubiquitination and degradation of BTRC. As part of a multisubunit ECS complex, polyubiquitinates monoubiquitinated POLR2A. As part of the ECS(RAB40C) complex, mediates ANKRD28 ubiquitination and degradation, thereby regulating protein phosphatase 6 (PP6) complex activity and focal adhesion assembly during cell migration. As part of the ECS(RAB40A) complex, mediates RHOU 'Lys-48'-linked ubiquitination and degradation, thus inhibiting focal adhesion disassembly during cell migration. As part of the ECS(RAB40B) complex, mediates LIMA1/EPLIN and RAP2 ubiquitination, thereby regulating actin cytoskeleton dynamics and stress fiber formation during cell migration. May form a cell surface vasopressin receptor. The sequence is that of Cullin-5 from Pongo abelii (Sumatran orangutan).